A 148-amino-acid polypeptide reads, in one-letter code: Outer envelope pore protein 16-1, chloroplastic (148 aa).

Positions 2–73 (PSSTFSGTVS…EHALKKLCKE (72 aa)) are contains 4 beta strands. 3 helical membrane-spanning segments follow: residues 75-91 (VYWG…EYGI), 102-118 (NAML…SAVG), and 125-142 (IVID…SQFV).

This sequence belongs to the Tim17/Tim22/Tim23 family. Plastid outer envelope porin OEP16 (TC 1.B.30) subfamily. Homodimer and oligomers in membrane. Forms large complexes including TOC33, pPORA and OEP161 during pPORA import into plastids at the plastid envelope membrane. Expressed predominantly in leaves and cotyledons.

It localises to the plastid. Its subcellular location is the chloroplast outer membrane. It is found in the etioplast membrane. With respect to regulation, stimulated by GTP. In terms of biological role, voltage-dependent high-conductance channel with a slight cation-selectivity; selective for amino acids but excludes triosephosphates or uncharged sugars. Non-essential amino acid-selective channel protein and translocation pore for NADPH:protochlorophyllide oxidoreductase A (PORA) and possibly PORB. Involved in PORA precursor (pPORA) import and thus confers photoprotection onto etiolated seedlings during greening. The chain is Outer envelope pore protein 16-1, chloroplastic (OEP161) from Arabidopsis thaliana (Mouse-ear cress).